The primary structure comprises 96 residues: Early E1A 11 kDa protein (96 aa).

2 disordered regions span residues 1–29 (MNSR…QDQQ) and 72–96 (LAQG…EESD). Acidic residues predominate over residues 75–96 (GEEEEEEEDGAEDIEENGEESD).

The sequence is that of Early E1A 11 kDa protein from Murine adenovirus A serotype 1 (MAdV-1).